The sequence spans 217 residues: 3,4-dihydroxy-2-butanone 4-phosphate synthase (217 aa).

D-ribulose 5-phosphate is bound by residues 37–38 (RE), D42, 150–154 (RGGHT), and E174. E38 contacts Mg(2+). Residue H153 participates in Mg(2+) binding.

The protein belongs to the DHBP synthase family. Homodimer. The cofactor is Mg(2+). It depends on Mn(2+) as a cofactor.

The catalysed reaction is D-ribulose 5-phosphate = (2S)-2-hydroxy-3-oxobutyl phosphate + formate + H(+). The protein operates within cofactor biosynthesis; riboflavin biosynthesis; 2-hydroxy-3-oxobutyl phosphate from D-ribulose 5-phosphate: step 1/1. Its function is as follows. Catalyzes the conversion of D-ribulose 5-phosphate to formate and 3,4-dihydroxy-2-butanone 4-phosphate. The chain is 3,4-dihydroxy-2-butanone 4-phosphate synthase from Pectobacterium carotovorum subsp. carotovorum (strain PC1).